Here is a 470-residue protein sequence, read N- to C-terminus: Argininosuccinate lyase (470 aa).

The protein belongs to the lyase 1 family. Argininosuccinate lyase subfamily.

It is found in the cytoplasm. The catalysed reaction is 2-(N(omega)-L-arginino)succinate = fumarate + L-arginine. It functions in the pathway amino-acid biosynthesis; L-arginine biosynthesis; L-arginine from L-ornithine and carbamoyl phosphate: step 3/3. This chain is Argininosuccinate lyase, found in Mycobacterium sp. (strain MCS).